Reading from the N-terminus, the 435-residue chain is Monodehydroascorbate reductase 3, cytosolic (435 aa).

Residues 14–17 (GGVA), Glu-41, Arg-48, Lys-53, Ile-96, and 147–148 (RE) contribute to the FAD site. NAD(+) contacts are provided by residues 172 to 178 (GGYIGLE), Glu-196, Arg-202, and Gly-261. 174–178 (YIGLE) is an NADP(+) binding site. NADP(+) contacts are provided by Arg-202 and Gly-261. Asp-298 serves as a coordination point for FAD. Residue 314–315 (EH) coordinates NAD(+). 314–315 (EH) contacts NADP(+). Position 316 (Val-316) interacts with FAD. Arg-320 is an L-ascorbate binding site. FAD is bound at residue Tyr-349. Residue Tyr-349 participates in NAD(+) binding. Tyr-349 is an NADP(+) binding site. Residue Arg-351 coordinates L-ascorbate.

The protein belongs to the FAD-dependent oxidoreductase family. FAD is required as a cofactor.

The protein resides in the cytoplasm. It catalyses the reaction 2 monodehydro-L-ascorbate radical + NADH + H(+) = 2 L-ascorbate + NAD(+). Its function is as follows. Catalyzes the conversion of monodehydroascorbate to ascorbate, oxidizing NADH in the process. Ascorbate is a major antioxidant against reactive oxygen species (ROS) and nitric oxide (NO). Can use NADPH as electron donor, but possesses lower activity compared to NADH as electron donor. This chain is Monodehydroascorbate reductase 3, cytosolic, found in Oryza sativa subsp. japonica (Rice).